We begin with the raw amino-acid sequence, 166 residues long: Myosin regulatory light chain 2, ventricular/cardiac muscle isoform (166 aa).

A N,N,N-trimethylserine modification is found at S2. 3 positions are modified to phosphoserine: S14, S15, and S19. EF-hand domains follow at residues 24-59, 94-129, and 130-165; these read TQIQ…LGRV, DPEE…QAER, and FSKE…GEEK. Positions 37, 39, 41, and 48 each coordinate Ca(2+). T52 carries the post-translational modification Phosphothreonine.

In terms of assembly, myosin is a hexamer of 2 heavy chains and 4 light chains. Interacts with MYOC. In terms of processing, N-terminus is methylated by METTL11A/NTM1. Phosphorylated by MYLK3 and MYLK2; promotes cardiac muscle contraction and function. Dephosphorylated by PPP1CB complexed to PPP1R12B. The phosphorylated form in adult is expressed as gradients across the heart from endocardium (low phosphorylation) to epicardium (high phosphorylation); regulates cardiac torsion and workload distribution. In terms of tissue distribution, abundantly expressed in both cardiac and slow skeletal muscle (soleus), with no detectable expression in fast skeletal muscle (vastus lateralis) or non-muscle tissue.

The protein resides in the cytoplasm. It is found in the myofibril. The protein localises to the sarcomere. Its subcellular location is the a band. Its function is as follows. Contractile protein that plays a role in heart development and function. Following phosphorylation, plays a role in cross-bridge cycling kinetics and cardiac muscle contraction by increasing myosin lever arm stiffness and promoting myosin head diffusion; as a consequence of the increase in maximum contraction force and calcium sensitivity of contraction force. These events altogether slow down myosin kinetics and prolong duty cycle resulting in accumulated myosins being cooperatively recruited to actin binding sites to sustain thin filament activation as a means to fine-tune myofilament calcium sensitivity to force. During cardiogenesis plays an early role in cardiac contractility by promoting cardiac myofibril assembly. The protein is Myosin regulatory light chain 2, ventricular/cardiac muscle isoform of Rattus norvegicus (Rat).